Consider the following 857-residue polypeptide: Inactive rhomboid protein 1 (857 aa).

Residues 1–413 (MAELRRDSTS…HRPFFTYWIT (413 aa)) are Cytoplasmic-facing. Positions 283-307 (FESPSDSTMKDVDSKQLDESELTGS) are disordered. Over residues 290–300 (TMKDVDSKQLD) the composition is skewed to basic and acidic residues. A helical membrane pass occupies residues 414 to 434 (FVHILITILAVCIYGIAPVGF). At 435-661 (SQHETVDSVL…PDQFYRLWLS (227 aa)) the chain is on the lumenal side. N-linked (GlcNAc...) asparagine glycosylation is present at Asn-585. A helical transmembrane segment spans residues 662 to 682 (LFLHAGILHCLVSVCFQMTIL). The Cytoplasmic portion of the chain corresponds to 683–693 (RDLEKLAGWLR). A helical transmembrane segment spans residues 694 to 714 (ISIIYILSGITGNLASAIFLP). The Lumenal segment spans residues 715 to 716 (YR). A helical transmembrane segment spans residues 717–737 (AEVGPAGSQFGILACLFVELI). Residues 738-748 (QSWQILAQPWR) lie on the Cytoplasmic side of the membrane. The chain crosses the membrane as a helical span at residues 749 to 769 (AFTKLLCVVLFLFAFGLLPWI). The Lumenal portion of the chain corresponds to 770–774 (DNFAH). Residues 775–795 (ISGFISGFFLSFAFLPYISFG) form a helical membrane-spanning segment. Residues 796-805 (RLDMYRKRCQ) lie on the Cytoplasmic side of the membrane. Residues 806–826 (IIIFLVVFLGLFAGLVVLFYV) traverse the membrane as a helical segment. At 827–857 (HPIKCEWCELLTCIPFTDKFCEKYDLNAHLH) the chain is on the lumenal side.

Belongs to the peptidase S54 family.

It localises to the endoplasmic reticulum membrane. It is found in the golgi apparatus membrane. In terms of biological role, regulates ADAM17 protease, a sheddase of the epidermal growth factor (EGF) receptor ligands and TNF, thereby plays a role in sleep, cell survival, proliferation, migration and inflammation. Does not exhibit any protease activity on its own. This is Inactive rhomboid protein 1 (rhbdf1) from Danio rerio (Zebrafish).